The following is a 355-amino-acid chain: Glucose-6-phosphatase 2 (355 aa).

At 1–24 the chain is on the lumenal side; sequence MDFLHRSGVLIIHHLQEDYRTYYG. Residues 25 to 45 traverse the membrane as a helical segment; that stretch reads FLNFMSNVGDPRNIFSIYFPL. The Cytoplasmic segment spans residues 46-56; it reads WFQLNQNVGTK. A helical transmembrane segment spans residues 57 to 77; sequence MIWVAVIGDWFNLIFKWILFG. The Lumenal portion of the chain corresponds to 78–115; the sequence is HRPYWWIQETEIYPNHSSPCLEQFPTTCETGPGSPSGH. Arginine 79 contacts substrate. An N-linked (GlcNAc...) asparagine glycan is attached at asparagine 92. Histidine 115 (proton donor) is an active-site residue. The helical transmembrane segment at 116-136 threads the bilayer; it reads AMGSSCVWYVMVTAALSYTIS. At 137–146 the chain is on the cytoplasmic side; the sequence is RMEESSVTLH. A helical transmembrane segment spans residues 147–167; it reads RLTWSFLWSVFWLIQISVCIS. A topological domain (lumenal) is located at residue arginine 168. Arginine 168 serves as a coordination point for substrate. Residues 169–189 form a helical membrane-spanning segment; sequence VFIATHFPHQVILGVIGGMLV. Histidine 174 serves as the catalytic Nucleophile. Topologically, residues 190 to 211 are cytoplasmic; that stretch reads AEAFEHTPGVHMASLSVYLKTN. The chain crosses the membrane as a helical span at residues 212–232; sequence VFLFLFALGFYLLLRLFGIDL. The Lumenal portion of the chain corresponds to 233–252; it reads LWSVPIAKKWCANPDWIHID. A helical membrane pass occupies residues 253 to 273; sequence STPFAGLVRNLGVLFGLGFAI. Topologically, residues 274-290 are cytoplasmic; the sequence is NSEMFLRSCQGENGTKP. A helical membrane pass occupies residues 291-307; that stretch reads SFRLLCALTSLTTMQLY. Topologically, residues 308–318 are lumenal; it reads RFIKIPTHAEP. A helical membrane pass occupies residues 319 to 339; that stretch reads LFYLLSFCKSASIPLMVVALI. Topologically, residues 340–355 are cytoplasmic; it reads PYCVHMLMRPGDKKTK. The short motif at 352 to 355 is the Prevents secretion from ER element; that stretch reads KKTK.

This sequence belongs to the glucose-6-phosphatase family. N-glycosylated; the non-glycosylated form is more unstable and is degraded through the proteasome. In terms of tissue distribution, specifically expressed in pancreatic islet cells, in particular those of beta-cell origin. Not detected in testis, kidney, muscle, liver, lung, spleen, brain, pituitary, gastric fundus or heart.

It localises to the endoplasmic reticulum membrane. The enzyme catalyses D-glucose 6-phosphate + H2O = D-glucose + phosphate. Its pathway is carbohydrate biosynthesis; gluconeogenesis. May hydrolyze glucose-6-phosphate to glucose in the endoplasmic reticulum. May be responsible for glucose production through glycogenolysis and gluconeogenesis. This chain is Glucose-6-phosphatase 2 (G6pc2), found in Mus musculus (Mouse).